A 219-amino-acid chain; its full sequence is Elongation factor Ts (219 aa).

The involved in Mg(2+) ion dislocation from EF-Tu stretch occupies residues 82–85 (TDFV).

The protein belongs to the EF-Ts family.

Its subcellular location is the cytoplasm. Functionally, associates with the EF-Tu.GDP complex and induces the exchange of GDP to GTP. It remains bound to the aminoacyl-tRNA.EF-Tu.GTP complex up to the GTP hydrolysis stage on the ribosome. This Trichodesmium erythraeum (strain IMS101) protein is Elongation factor Ts.